A 139-amino-acid chain; its full sequence is Toxin FitB (139 aa).

The PINc domain occupies I2–T123. Positions 5 and 104 each coordinate Mg(2+).

The protein belongs to the PINc/VapC protein family. Forms a heterodimer with FitA, 4 FitAB heterodimers form a complex that binds to promoter DNA. The complex is also seen in solution. This protein does not actually contact DNA. Requires Mg(2+) as cofactor.

Toxic component of a type II toxin-antitoxin (TA) system. Plays a role in the speed with which bacteria traverse human epithelial cells; disruption of the locus increases the speed of trafficking about 2-4-fold. FitAB binds to its own promoter better than FitA alone. The expected nuclease activity was not observed for the FitAB complex, perhaps because FitA (the antitoxin) prevents metal binding and thus catalysis by FitB. The polypeptide is Toxin FitB (fitB) (Neisseria gonorrhoeae (strain ATCC 700825 / FA 1090)).